We begin with the raw amino-acid sequence, 319 residues long: ATP-dependent 6-phosphofructokinase (319 aa).

Residue glycine 11 coordinates ATP. An ADP-binding site is contributed by 21–25; that stretch reads RAVVR. ATP contacts are provided by residues 72–73 and 102–105; these read RC and GDGS. Aspartate 103 contacts Mg(2+). 125 to 127 provides a ligand contact to substrate; that stretch reads TID. Aspartate 127 serves as the catalytic Proton acceptor. Arginine 154 contributes to the ADP binding site. Residues arginine 162 and 169-171 contribute to the substrate site; that span reads MGR. ADP contacts are provided by residues 185 to 187, lysine 211, and 213 to 215; these read GAE and KMH. Substrate is bound by residues glutamate 222, arginine 243, and 249–252; that span reads HIQR.

The protein belongs to the phosphofructokinase type A (PFKA) family. ATP-dependent PFK group I subfamily. Prokaryotic clade 'B1' sub-subfamily. Homotetramer. The cofactor is Mg(2+).

Its subcellular location is the cytoplasm. The catalysed reaction is beta-D-fructose 6-phosphate + ATP = beta-D-fructose 1,6-bisphosphate + ADP + H(+). Its pathway is carbohydrate degradation; glycolysis; D-glyceraldehyde 3-phosphate and glycerone phosphate from D-glucose: step 3/4. With respect to regulation, allosterically activated by ADP and other diphosphonucleosides, and allosterically inhibited by phosphoenolpyruvate. In terms of biological role, catalyzes the phosphorylation of D-fructose 6-phosphate to fructose 1,6-bisphosphate by ATP, the first committing step of glycolysis. In Clostridium botulinum (strain ATCC 19397 / Type A), this protein is ATP-dependent 6-phosphofructokinase.